A 915-amino-acid polypeptide reads, in one-letter code: Coiled-coil domain-containing protein 57 (915 aa).

The tract at residues methionine 1–glutamine 502 is centrosomal targeting domain. Coiled coils occupy residues valine 92 to glutamate 173, leucine 214 to aspartate 422, lysine 456 to glutamate 483, and isoleucine 521 to glutamine 548. 3 disordered regions span residues threonine 555–alanine 574, proline 606–proline 653, and glutamine 724–aspartate 915. Residues proline 606–aspartate 915 form a microtubule binding domain region. Positions histidine 613–threonine 627 are enriched in polar residues. Over residues glycine 628–glycine 652 the composition is skewed to low complexity. Basic and acidic residues predominate over residues glycine 745–serine 758. 3 stretches are compositionally biased toward polar residues: residues proline 781–serine 794, serine 819–leucine 830, and serine 841–serine 852. Positions lysine 879–alanine 891 are enriched in low complexity.

As to quaternary structure, interacts with CEP63; the interaction is required for their location to proximal end of centrioles. Interacts with microtubules.

The protein localises to the cytoplasm. It localises to the cytoskeleton. Its subcellular location is the microtubule organizing center. The protein resides in the centrosome. It is found in the centriolar satellite. The protein localises to the centriole. It localises to the spindle. In terms of biological role, pleiotropic regulator of centriole duplication, mitosis, and ciliogenesis. Critical interface between centrosome and microtubule-mediated cellular processes. Centriole duplication protein required for recruitment of CEP63, CEP152, and PLK4 to the centrosome. Independent of its centrosomal targeting, localizes to and interacts with microtubules and regulates microtubule nucleation, stability, and mitotic progression. This chain is Coiled-coil domain-containing protein 57, found in Homo sapiens (Human).